The sequence spans 412 residues: Solute carrier family 22 member 18 (412 aa).

10 consecutive transmembrane segments (helical) span residues 16 to 36, 51 to 71, 117 to 137, 148 to 168, 176 to 196, 232 to 252, 264 to 284, 294 to 314, 316 to 336, and 380 to 400; these read GIIILTYVLAALELTCLFMQF, VSFGYLQTTFGVLQLLGGPVF, LPAALMHTLPAAQMVITDLTA, LGLCFGIGVIFGSLLGGTLST, AFLAFVVTLLGAVLSFTCIPV, FLVKVISGFPSGLFMVMFSII, AGYLMSFFGILQMMIQGLVIG, ALLRSSVLVFAVVGLGMALMS, VFHFCLLLPGLVFSLCALNIV, and GVSILGHVQLMVNLLVLLVLW.

This sequence belongs to the major facilitator (TC 2.A.1) superfamily. Organic cation transporter (TC 2.A.1.19) family.

The protein localises to the apical cell membrane. Functionally, may act as a transporter of organic cations based on a proton efflux antiport mechanism. May play a role in the transport of chloroquine and quinidine-related compounds in kidney. Plays a role in the regulation of lipid metabolism. The chain is Solute carrier family 22 member 18 (Slc67a1) from Rattus norvegicus (Rat).